Reading from the N-terminus, the 145-residue chain is UPF0201 protein LS215_1276 (145 aa).

This sequence belongs to the UPF0201 family.

This chain is UPF0201 protein LS215_1276, found in Saccharolobus islandicus (strain L.S.2.15 / Lassen #1) (Sulfolobus islandicus).